Consider the following 371-residue polypeptide: UDP-N-acetylglucosamine--N-acetylmuramyl-(pentapeptide) pyrophosphoryl-undecaprenol N-acetylglucosamine transferase (371 aa).

Residues 15–17, Asn-126, Arg-172, Ser-199, Ile-256, 275–280, and Gln-301 contribute to the UDP-N-acetyl-alpha-D-glucosamine site; these read TGG and ALTVSE.

Belongs to the glycosyltransferase 28 family. MurG subfamily.

Its subcellular location is the cell inner membrane. The catalysed reaction is di-trans,octa-cis-undecaprenyl diphospho-N-acetyl-alpha-D-muramoyl-L-alanyl-D-glutamyl-meso-2,6-diaminopimeloyl-D-alanyl-D-alanine + UDP-N-acetyl-alpha-D-glucosamine = di-trans,octa-cis-undecaprenyl diphospho-[N-acetyl-alpha-D-glucosaminyl-(1-&gt;4)]-N-acetyl-alpha-D-muramoyl-L-alanyl-D-glutamyl-meso-2,6-diaminopimeloyl-D-alanyl-D-alanine + UDP + H(+). The protein operates within cell wall biogenesis; peptidoglycan biosynthesis. Functionally, cell wall formation. Catalyzes the transfer of a GlcNAc subunit on undecaprenyl-pyrophosphoryl-MurNAc-pentapeptide (lipid intermediate I) to form undecaprenyl-pyrophosphoryl-MurNAc-(pentapeptide)GlcNAc (lipid intermediate II). The sequence is that of UDP-N-acetylglucosamine--N-acetylmuramyl-(pentapeptide) pyrophosphoryl-undecaprenol N-acetylglucosamine transferase from Francisella tularensis subsp. tularensis (strain FSC 198).